The chain runs to 190 residues: uncharacterized protein (190 aa).

This is an uncharacterized protein from Acidianus hospitalis (AFV-1).